A 130-amino-acid polypeptide reads, in one-letter code: Large ribosomal subunit protein bL12 (130 aa).

The protein belongs to the bacterial ribosomal protein bL12 family. As to quaternary structure, homodimer. Part of the ribosomal stalk of the 50S ribosomal subunit. Forms a multimeric L10(L12)X complex, where L10 forms an elongated spine to which 2 to 4 L12 dimers bind in a sequential fashion. Binds GTP-bound translation factors.

Forms part of the ribosomal stalk which helps the ribosome interact with GTP-bound translation factors. Is thus essential for accurate translation. The polypeptide is Large ribosomal subunit protein bL12 (Mycobacterium bovis (strain ATCC BAA-935 / AF2122/97)).